Here is a 433-residue protein sequence, read N- to C-terminus: Ribosomal protein uS12 methylthiotransferase RimO (433 aa).

The region spanning 9-124 (NKINVITLGC…LLKALGADYR (116 aa)) is the MTTase N-terminal domain. Residues C18, C53, C87, C148, C152, and C155 each coordinate [4Fe-4S] cluster. Residues 134-364 (TTPKNYAYLK…MDLQSQISWD (231 aa)) enclose the Radical SAM core domain. In terms of domain architecture, TRAM spans 367–433 (QEKLGQTFRC…TEFDLYGEPA (67 aa)).

The protein belongs to the methylthiotransferase family. RimO subfamily. It depends on [4Fe-4S] cluster as a cofactor.

It localises to the cytoplasm. It catalyses the reaction L-aspartate(89)-[ribosomal protein uS12]-hydrogen + (sulfur carrier)-SH + AH2 + 2 S-adenosyl-L-methionine = 3-methylsulfanyl-L-aspartate(89)-[ribosomal protein uS12]-hydrogen + (sulfur carrier)-H + 5'-deoxyadenosine + L-methionine + A + S-adenosyl-L-homocysteine + 2 H(+). In terms of biological role, catalyzes the methylthiolation of an aspartic acid residue of ribosomal protein uS12. This is Ribosomal protein uS12 methylthiotransferase RimO from Flavobacterium psychrophilum (strain ATCC 49511 / DSM 21280 / CIP 103535 / JIP02/86).